We begin with the raw amino-acid sequence, 360 residues long: Metalloendoproteinase 5-MMP (360 aa).

The N-terminal stretch at 1 to 20 (MRTLLLTILIFFFTVNPISA) is a signal peptide. The propeptide at 21 to 142 (KFYTNVSSIP…GGKILRTTEK (122 aa)) is activation peptide. N-linked (GlcNAc...) asparagine glycans are attached at residues asparagine 25, asparagine 36, and asparagine 78. Residues 117-124 (PRCGNPDL) carry the Cysteine switch motif. Position 119 (cysteine 119) interacts with Zn(2+). 2 N-linked (GlcNAc...) asparagine glycosylation sites follow: asparagine 168 and asparagine 191. Histidine 270 is a binding site for Zn(2+). Glutamate 271 is a catalytic residue. Histidine 274 and histidine 280 together coordinate Zn(2+). The disordered stretch occupies residues 312 to 336 (LYGGNPNGDGGGSKPSRESQSTGGD). Serine 337 carries the GPI-anchor amidated serine lipid modification. Positions 338 to 360 (VRRWRGWMISLSSIATCIFLISV) are cleaved as a propeptide — removed in mature form.

It belongs to the peptidase M10A family. Matrix metalloproteinases (MMPs) subfamily. Zn(2+) serves as cofactor. In terms of tissue distribution, mostly expressed in leaves, roots and stems, and, to a lower extent, in flowers.

The protein localises to the cell membrane. Repressed by acetohydroxamic acid (AHA). Matrix metalloproteinases (MMPs) or matrixins may play a role in the degradation and remodeling of the extracellular matrix (ECM) during development or in response to stresses. Active on Mca-KESAbuNLFVLKDpaR-NH(2) (QF75) and, to some extent, on McaPLGLDpaAR-NH(2) (QF24), myelin basic protein (MBP) and beta-casein. The polypeptide is Metalloendoproteinase 5-MMP (Arabidopsis thaliana (Mouse-ear cress)).